Here is a 390-residue protein sequence, read N- to C-terminus: tRNA(Met) cytidine acetate ligase (390 aa).

ATP is bound by residues 7–20 (VVEYNPFHNGHKLH), Gly101, Asn162, and Arg187.

The protein belongs to the TmcAL family.

It localises to the cytoplasm. The enzyme catalyses cytidine(34) in elongator tRNA(Met) + acetate + ATP = N(4)-acetylcytidine(34) in elongator tRNA(Met) + AMP + diphosphate. Functionally, catalyzes the formation of N(4)-acetylcytidine (ac(4)C) at the wobble position of elongator tRNA(Met), using acetate and ATP as substrates. First activates an acetate ion to form acetyladenylate (Ac-AMP) and then transfers the acetyl group to tRNA to form ac(4)C34. This is tRNA(Met) cytidine acetate ligase from Listeria monocytogenes serovar 1/2a (strain ATCC BAA-679 / EGD-e).